The chain runs to 232 residues: Large ribosomal subunit protein uL1 (232 aa).

Belongs to the universal ribosomal protein uL1 family. As to quaternary structure, part of the 50S ribosomal subunit.

Binds directly to 23S rRNA. The L1 stalk is quite mobile in the ribosome, and is involved in E site tRNA release. In terms of biological role, protein L1 is also a translational repressor protein, it controls the translation of the L11 operon by binding to its mRNA. This is Large ribosomal subunit protein uL1 from Burkholderia lata (strain ATCC 17760 / DSM 23089 / LMG 22485 / NCIMB 9086 / R18194 / 383).